A 113-amino-acid polypeptide reads, in one-letter code: UPF0251 protein TK0562 (113 aa).

It belongs to the UPF0251 family.

This Thermococcus kodakarensis (strain ATCC BAA-918 / JCM 12380 / KOD1) (Pyrococcus kodakaraensis (strain KOD1)) protein is UPF0251 protein TK0562.